The chain runs to 281 residues: Protein NipSnap homolog 2 (281 aa).

The N-terminal 27 residues, 1–27 (MAARVLLARGGLLRPAAQSAFLPGLRT), are a transit peptide targeting the mitochondrion.

Belongs to the NipSnap family. Interacts with CALCOCO2/NDP52, NBR1, SQSTM1/p62, TAX1BP1 and WDFY3/ALFY. Interacts with ATG8 family proteins (MAP1LC3A, MAP1LC3B, MAP1LC3C, GABARAP, GABARAPL1 and GABARAPL2). Interacts with VDAC1.

It localises to the mitochondrion matrix. Its subcellular location is the cytoplasm. Its function is as follows. Protein involved in mitophagy by facilitating recruitment of the autophagy machinery required for clearance of damaged mitochondria. Accumulates on the mitochondria surface in response to mitochondrial depolarization and acts as a 'eat me' signal by recruiting proteins involved in selective autophagy, such as autophagy receptors (CALCOCO2/NDP52, NBR1, SQSTM1/p62, TAX1BP1 and WDFY3/ALFY) and ATG8 family proteins (MAP1LC3A, MAP1LC3B, MAP1LC3C, GABARAP, GABARAPL1 and GABARAPL2). May act as a positive regulator of L-type calcium channels. The protein is Protein NipSnap homolog 2 of Mus musculus (Mouse).